The sequence spans 354 residues: Guanine nucleotide-binding protein G(o) subunit alpha (354 aa).

Glycine 2 carries N-myristoyl glycine lipidation. A lipid anchor (S-palmitoyl cysteine) is attached at cysteine 3. One can recognise a G-alpha domain in the interval 32–354 (KDIKLLLLGA…ANNLRGCGLY (323 aa)). A G1 motif region spans residues 35 to 48 (KLLLLGAGESGKST). GTP-binding positions include 40-47 (GAGESGKS), 176-182 (LRTRVKT), 201-205 (DVGGQ), 270-273 (NKKD), and alanine 326. Serine 47 and threonine 182 together coordinate Mg(2+). The segment at 174–182 (DILRTRVKT) is G2 motif. A G3 motif region spans residues 197–206 (FKLFDVGGQR). A G4 motif region spans residues 266-273 (ILFLNKKD). The tract at residues 324–329 (TCATDT) is G5 motif.

It belongs to the G-alpha family. G(i/o/t/z) subfamily. In terms of assembly, g proteins are composed of 3 units; alpha, beta and gamma. The alpha chain contains the guanine nucleotide binding site.

Functionally, guanine nucleotide-binding proteins (G proteins) are involved as modulators or transducers in various transmembrane signaling systems. The G(o) protein function is not clear. This is Guanine nucleotide-binding protein G(o) subunit alpha from Lymnaea stagnalis (Great pond snail).